Here is a 232-residue protein sequence, read N- to C-terminus: LexA repressor (232 aa).

Residues 1–10 (MDDSNDSSSA) are compositionally biased toward polar residues. Residues 1–22 (MDDSNDSSSAGPDGRLHAVDPS) form a disordered region. Positions 47 to 67 (IREIGDAVGLTSTSSVAHQLR) form a DNA-binding region, H-T-H motif. Active-site for autocatalytic cleavage activity residues include Ser-156 and Lys-193.

The protein belongs to the peptidase S24 family. In terms of assembly, homodimer.

The catalysed reaction is Hydrolysis of Ala-|-Gly bond in repressor LexA.. In terms of biological role, represses a number of genes involved in the response to DNA damage (SOS response), including recA and lexA. In the presence of single-stranded DNA, RecA interacts with LexA causing an autocatalytic cleavage which disrupts the DNA-binding part of LexA, leading to derepression of the SOS regulon and eventually DNA repair. The sequence is that of LexA repressor from Mycolicibacterium paratuberculosis (strain ATCC BAA-968 / K-10) (Mycobacterium paratuberculosis).